The following is an 86-amino-acid chain: DNA-directed RNA polymerase subunit Rpo6 (86 aa).

The protein belongs to the archaeal Rpo6/eukaryotic RPB6 RNA polymerase subunit family. As to quaternary structure, part of the RNA polymerase complex.

It is found in the cytoplasm. The enzyme catalyses RNA(n) + a ribonucleoside 5'-triphosphate = RNA(n+1) + diphosphate. DNA-dependent RNA polymerase (RNAP) catalyzes the transcription of DNA into RNA using the four ribonucleoside triphosphates as substrates. This chain is DNA-directed RNA polymerase subunit Rpo6, found in Sulfurisphaera tokodaii (strain DSM 16993 / JCM 10545 / NBRC 100140 / 7) (Sulfolobus tokodaii).